The sequence spans 120 residues: NAD(P)H-quinone oxidoreductase subunit 3, chloroplastic (120 aa).

A run of 3 helical transmembrane segments spans residues 9–29 (IFWV…LISG), 64–84 (MFAL…PWAM), and 88–108 (VLGV…IVGL).

This sequence belongs to the complex I subunit 3 family. As to quaternary structure, NDH is composed of at least 16 different subunits, 5 of which are encoded in the nucleus.

The protein localises to the plastid. It is found in the chloroplast thylakoid membrane. The enzyme catalyses a plastoquinone + NADH + (n+1) H(+)(in) = a plastoquinol + NAD(+) + n H(+)(out). It carries out the reaction a plastoquinone + NADPH + (n+1) H(+)(in) = a plastoquinol + NADP(+) + n H(+)(out). Functionally, NDH shuttles electrons from NAD(P)H:plastoquinone, via FMN and iron-sulfur (Fe-S) centers, to quinones in the photosynthetic chain and possibly in a chloroplast respiratory chain. The immediate electron acceptor for the enzyme in this species is believed to be plastoquinone. Couples the redox reaction to proton translocation, and thus conserves the redox energy in a proton gradient. This chain is NAD(P)H-quinone oxidoreductase subunit 3, chloroplastic, found in Cucumis sativus (Cucumber).